We begin with the raw amino-acid sequence, 97 residues long: Cornifin (97 aa).

The segment at 1 to 42 is disordered; the sequence is MSSQQQKQPCTPPPQPQQQQVKQPCQPPPQEPCVPKTKEPCH. Ser-2 carries the N-acetylserine modification. Tandem repeats lie at residues 3-14, 18-29, 31-38, 39-46, 47-54, 55-62, 63-70, 71-78, and 79-85. The segment at 3–29 is 2 X 12 AA approximate repeats; it reads SQQQKQPCTPPPQPQQQQVKQPCQPPP. The segment at 31 to 85 is 7 X 8 AA approximate tandem repeats; the sequence is EPCVPKTKEPCHPKVPEPCQPKVPEPCQPKVPEPCHPKVPEPCQPKVPEPCPSPV.

This sequence belongs to the cornifin (SPRR) family. As to expression, not detected in normal lung tissue but seen in tumor tissues. Cells around the keratin pearls contain high levels.

The protein resides in the cytoplasm. Cross-linked envelope protein of keratinocytes. It is a keratinocyte protein that first appears in the cell cytosol, but ultimately becomes cross-linked to membrane proteins by transglutaminase. All that results in the formation of an insoluble envelope beneath the plasma membrane. The protein is Cornifin (SPRP) of Sus scrofa (Pig).